The chain runs to 134 residues: Small ribosomal subunit protein uS8c (134 aa).

It belongs to the universal ribosomal protein uS8 family. Part of the 30S ribosomal subunit.

The protein resides in the plastid. It localises to the chloroplast. In terms of biological role, one of the primary rRNA binding proteins, it binds directly to 16S rRNA central domain where it helps coordinate assembly of the platform of the 30S subunit. This Cucumis sativus (Cucumber) protein is Small ribosomal subunit protein uS8c (rps8).